A 142-amino-acid chain; its full sequence is Ribosome-binding factor A (142 aa).

A disordered region spans residues 118–142 (DEAKQQEHGTVENAKQDGDKAEDDK).

The protein belongs to the RbfA family. Monomer. Binds 30S ribosomal subunits, but not 50S ribosomal subunits or 70S ribosomes.

It localises to the cytoplasm. Functionally, one of several proteins that assist in the late maturation steps of the functional core of the 30S ribosomal subunit. Associates with free 30S ribosomal subunits (but not with 30S subunits that are part of 70S ribosomes or polysomes). Required for efficient processing of 16S rRNA. May interact with the 5'-terminal helix region of 16S rRNA. This is Ribosome-binding factor A from Shewanella piezotolerans (strain WP3 / JCM 13877).